Here is a 200-residue protein sequence, read N- to C-terminus: Pyridoxamine 5'-phosphate oxidase homolog (200 aa).

Positions 60, 68, and 125 each coordinate FMN.

This sequence belongs to the pyridoxamine 5'-phosphate oxidase family. FMN serves as cofactor.

It is found in the cytoplasm. The protein resides in the nucleus. This chain is Pyridoxamine 5'-phosphate oxidase homolog, found in Saccharomyces cerevisiae (strain ATCC 204508 / S288c) (Baker's yeast).